A 468-amino-acid polypeptide reads, in one-letter code: UDP-N-acetylmuramoyl-L-alanine--L-glutamate ligase (468 aa).

122-128 lines the ATP pocket; that stretch reads GTKGKST.

It belongs to the MurCDEF family. MurD2 subfamily.

It localises to the cytoplasm. The catalysed reaction is UDP-N-acetyl-alpha-D-muramoyl-L-alanine + L-glutamate + ATP = UDP-N-acetyl-alpha-D-muramoyl-L-alanyl-L-glutamate + ADP + phosphate + H(+). The protein operates within cell wall biogenesis; peptidoglycan biosynthesis. In terms of biological role, cell wall formation. Catalyzes the addition of L-glutamate to the nucleotide precursor UDP-N-acetylmuramoyl-L-alanine. The protein is UDP-N-acetylmuramoyl-L-alanine--L-glutamate ligase of Xanthomonas euvesicatoria pv. vesicatoria (strain 85-10) (Xanthomonas campestris pv. vesicatoria).